The chain runs to 1123 residues: MKNLGGLFKILLLFFCLFLSTHIISVSCLNSDGLTLLSLLKHLDRVPPQVTSTWKINASEATPCNWFGITCDDSKNVASLNFTRSRVSGQLGPEIGELKSLQILDLSTNNFSGTIPSTLGNCTKLATLDLSENGFSDKIPDTLDSLKRLEVLYLYINFLTGELPESLFRIPKLQVLYLDYNNLTGPIPQSIGDAKELVELSMYANQFSGNIPESIGNSSSLQILYLHRNKLVGSLPESLNLLGNLTTLFVGNNSLQGPVRFGSPNCKNLLTLDLSYNEFEGGVPPALGNCSSLDALVIVSGNLSGTIPSSLGMLKNLTILNLSENRLSGSIPAELGNCSSLNLLKLNDNQLVGGIPSALGKLRKLESLELFENRFSGEIPIEIWKSQSLTQLLVYQNNLTGELPVEMTEMKKLKIATLFNNSFYGAIPPGLGVNSSLEEVDFIGNKLTGEIPPNLCHGRKLRILNLGSNLLHGTIPASIGHCKTIRRFILRENNLSGLLPEFSQDHSLSFLDFNSNNFEGPIPGSLGSCKNLSSINLSRNRFTGQIPPQLGNLQNLGYMNLSRNLLEGSLPAQLSNCVSLERFDVGFNSLNGSVPSNFSNWKGLTTLVLSENRFSGGIPQFLPELKKLSTLQIARNAFGGEIPSSIGLIEDLIYDLDLSGNGLTGEIPAKLGDLIKLTRLNISNNNLTGSLSVLKGLTSLLHVDVSNNQFTGPIPDNLEGQLLSEPSSFSGNPNLCIPHSFSASNNSRSALKYCKDQSKSRKSGLSTWQIVLIAVLSSLLVLVVVLALVFICLRRRKGRPEKDAYVFTQEEGPSLLLNKVLAATDNLNEKYTIGRGAHGIVYRASLGSGKVYAVKRLVFASHIRANQSMMREIDTIGKVRHRNLIKLEGFWLRKDDGLMLYRYMPKGSLYDVLHGVSPKENVLDWSARYNVALGVAHGLAYLHYDCHPPIVHRDIKPENILMDSDLEPHIGDFGLARLLDDSTVSTATVTGTTGYIAPENAFKTVRGRESDVYSYGVVLLELVTRKRAVDKSFPESTDIVSWVRSALSSSNNNVEDMVTTIVDPILVDELLDSSLREQVMQVTELALSCTQQDPAMRPTMRDAVKLLEDVKHLARSCSSDSVR.

The signal sequence occupies residues 1 to 28; sequence MKNLGGLFKILLLFFCLFLSTHIISVSC. The Extracellular portion of the chain corresponds to 29–769; that stretch reads LNSDGLTLLS…SRKSGLSTWQ (741 aa). One copy of the LRR 1 repeat lies at 31-53; it reads SDGLTLLSLLKHLDRVPPQVTST. N-linked (GlcNAc...) asparagine glycans are attached at residues Asn-57, Asn-81, Asn-110, and Asn-121. LRR repeat units lie at residues 74-98, 99-122, 124-145, 146-170, 171-194, 196-218, and 219-243; these read SKNV…IGEL, KSLQ…LGNC, KLAT…TLDS, LKRL…LFRI, PKLQ…IGDA, ELVE…IGNS, and SSLQ…NLLG. 2 N-linked (GlcNAc...) asparagine glycosylation sites follow: Asn-182 and Asn-217. Residues Asn-244, Asn-252, Asn-289, Asn-302, Asn-316, Asn-321, and Asn-337 are each glycosylated (N-linked (GlcNAc...) asparagine). LRR repeat units lie at residues 245-266, 267-290, 292-314, 315-338, 340-362, 363-386, 388-410, 412-434, 435-458, 459-482, 484-505, 506-529, 530-553, 554-577, 579-600, 601-625, 626-650, 652-674, 675-696, and 697-721; these read LTTL…SPNC, KNLL…LGNC, SLDA…LGML, KNLT…LGNC, SLNL…LGKL, RKLE…IWKS, SLTQ…MTEM, KLKI…LGVN, SSLE…LCHG, RKLR…IGHC, TIRR…FSQD, HSLS…LGSC, KNLS…LGNL, QNLG…LSNC, SLER…NFSN, WKGL…LPEL, KKLS…GLIE, LIYD…LGDL, IKLT…VLKG, and LTSL…LEGQ. N-linked (GlcNAc...) asparagine glycans are attached at residues Asn-398, Asn-420, and Asn-434. Residue Asn-494 is glycosylated (N-linked (GlcNAc...) asparagine). N-linked (GlcNAc...) asparagine glycans are attached at residues Asn-531, Asn-536, Asn-560, Asn-591, and Asn-597. 2 N-linked (GlcNAc...) asparagine glycosylation sites follow: Asn-681 and Asn-686. Asn-745 carries an N-linked (GlcNAc...) asparagine glycan. Residues 770-790 form a helical membrane-spanning segment; the sequence is IVLIAVLSSLLVLVVVLALVF. Topologically, residues 791-1123 are cytoplasmic; it reads ICLRRRKGRP…ARSCSSDSVR (333 aa). A Phosphothreonine modification is found at Thr-824. In terms of domain architecture, Protein kinase spans 827–1115; that stretch reads LNEKYTIGRG…LLEDVKHLAR (289 aa). Residues 833–841 and Lys-855 each bind ATP; that span reads IGRGAHGIV. Phosphotyrosine occurs at positions 901 and 941. Asp-954 (proton acceptor) is an active-site residue. Tyr-995 bears the Phosphotyrosine mark.

The protein belongs to the protein kinase superfamily. Ser/Thr protein kinase family. In terms of assembly, interacts with PEP1 and BAK1. Interacts with BIK1 and PBL1. Post-translationally, N-glycosylated.

It localises to the cell membrane. The catalysed reaction is L-seryl-[protein] + ATP = O-phospho-L-seryl-[protein] + ADP + H(+). It catalyses the reaction L-threonyl-[protein] + ATP = O-phospho-L-threonyl-[protein] + ADP + H(+). In terms of biological role, acts as a receptor for PEP defense peptides. Unlike typical immune receptors, senses an endogenous elicitor that potentiates pathogen-associated molecular pattern (PAMP)-inducible plant responses. Involved in PAMP-triggered immunity (PTI) signaling. Interacts with and phosphorylates the kinase BIK1, a central rate-limiting kinase in PTI signaling. This chain is Leucine-rich repeat receptor-like protein kinase PEPR1 (PEPR1), found in Arabidopsis thaliana (Mouse-ear cress).